Consider the following 481-residue polypeptide: RAC-beta serine/threonine-protein kinase (481 aa).

M1 is subject to N-acetylmethionine. The PH domain maps to 5-108; sequence SVIKEGWLHK…WIRAIQMVAN (104 aa). S34 carries the post-translational modification Phosphoserine. A disulfide bridge connects residues C60 and C77. At S126 the chain carries Phosphoserine. Residues S128 and S131 are each glycosylated (O-linked (GlcNAc) serine). The 258-residue stretch at 152–409 folds into the Protein kinase domain; the sequence is FDYLKLLGKG…AKEVMEHRFF (258 aa). ATP-binding positions include 158–166 and K181; that span reads LGKGTFGKV. Residue D275 is the Proton acceptor of the active site. N280 and D293 together coordinate Mn(2+). T306 is a glycosylation site (O-linked (GlcNAc) threonine). Position 309 is a phosphothreonine; by PDPK1 (T309). O-linked (GlcNAc) threonine glycosylation is present at T313. The region spanning 410–481 is the AGC-kinase C-terminal domain; sequence LSINWQDVVQ…QFSYSASIRE (72 aa). Position 447 is a phosphoserine (S447). T451 is modified (phosphothreonine). Phosphoserine is present on residues S461, S474, and S478. O-linked (GlcNAc) serine; alternate glycosylation is present at S474.

This sequence belongs to the protein kinase superfamily. AGC Ser/Thr protein kinase family. RAC subfamily. As to quaternary structure, interacts with BTBD10. Interacts with KCTD20. Interacts (via PH domain) with MTCP1, TCL1A and TCL1B; this interaction may facilitate AKT2 oligomerization and phosphorylation, hence increasing kinase activity. Interacts with PHB2; this interaction may be important for myogenic differentiation. Interacts (when phosphorylated) with CLIP3; this interaction promotes cell membrane localization. Interacts with WDFY2 (via WD repeats 1-3). Phosphorylation on Thr-309 and Ser-474 is required for full activity. Phosphorylation of the activation loop at Thr-309 by PDPK1/PDK1 is a prerequisite for full activation. Phosphorylated and activated by PDPK1/PDK1 in the presence of phosphatidylinositol 3,4,5-trisphosphate. Phosphorylation by mTORC2 in response to growth factors plays a key role in AKT1 activation: mTORC2 phosphorylates different sites depending on the context, such as Ser-474 or Ser-478, thereby facilitating subsequent phosphorylation of the activation loop by PDPK1/PDK1. In terms of processing, ubiquitinated; undergoes both 'Lys-48'- and 'Lys-63'-linked polyubiquitination. TRAF6-induced 'Lys-63'-linked AKT2 ubiquitination. When fully phosphorylated and translocated into the nucleus, undergoes 'Lys-48'-polyubiquitination catalyzed by TTC3, leading to its degradation by the proteasome. Post-translationally, O-GlcNAcylation at Thr-306 and Thr-313 inhibits activating phosphorylation at Thr-309 via disrupting the interaction between AKT and PDPK1/PDK1. As to expression, expressed in adipocytes and hepatocytes (at protein level). Expressed at low levels in skeletal muscle (at protein level).

It is found in the cytoplasm. The protein resides in the nucleus. Its subcellular location is the cell membrane. The protein localises to the early endosome. It catalyses the reaction L-seryl-[protein] + ATP = O-phospho-L-seryl-[protein] + ADP + H(+). It carries out the reaction L-threonyl-[protein] + ATP = O-phospho-L-threonyl-[protein] + ADP + H(+). Its activity is regulated as follows. Phosphorylation at Thr-309 (in the kinase domain) and Ser-474 (in the C-terminal regulatory region) is required for full activation. In adipocytes and hepatocytes, the activation is induced by insulin. AKT2 phosphorylation of PKP1 is induced by insulin. Functionally, serine/threonine kinase closely related to AKT1 and AKT3. All 3 enzymes, AKT1, AKT2 and AKT3, are collectively known as AKT kinase. AKT regulates many processes including metabolism, proliferation, cell survival, growth and angiogenesis, through the phosphorylation of a range of downstream substrates. Over 100 substrates have been reported so far, although for most of them, the precise AKT kinase catalyzing the reaction was not specified. AKT regulates glucose uptake by mediating insulin-induced translocation of the SLC2A4/GLUT4 glucose transporter to the cell surface. Phosphorylation of PTPN1 at 'Ser-50' negatively modulates its phosphatase activity preventing dephosphorylation of the insulin receptor and the attenuation of insulin signaling. Phosphorylation of TBC1D4 triggers the binding of this effector to inhibitory 14-3-3 proteins, which is required for insulin-stimulated glucose transport. AKT also regulates the storage of glucose in the form of glycogen by phosphorylating GSK3A at 'Ser-21' and GSK3B at 'Ser-9', resulting in inhibition of its kinase activity. Phosphorylation of GSK3 isoforms by AKT is also thought to be one mechanism by which cell proliferation is driven. AKT also regulates cell survival via the phosphorylation of MAP3K5 (apoptosis signal-related kinase). Phosphorylation of 'Ser-83' decreases MAP3K5 kinase activity stimulated by oxidative stress and thereby prevents apoptosis. AKT mediates insulin-stimulated protein synthesis by phosphorylating TSC2 at 'Ser-939' and 'Thr-1462', thereby activating mTORC1 signaling and leading to both phosphorylation of 4E-BP1 and in activation of RPS6KB1. AKT is involved in the phosphorylation of members of the FOXO factors (Forkhead family of transcription factors), leading to binding of 14-3-3 proteins and cytoplasmic localization. In particular, FOXO1 is phosphorylated at 'Thr-24', 'Ser-256' and 'Ser-319'. FOXO3 and FOXO4 are phosphorylated on equivalent sites. AKT has an important role in the regulation of NF-kappa-B-dependent gene transcription and positively regulates the activity of CREB1 (cyclic AMP (cAMP)-response element binding protein). The phosphorylation of CREB1 induces the binding of accessory proteins that are necessary for the transcription of pro-survival genes such as BCL2 and MCL1. AKT phosphorylates 'Ser-454' on ATP citrate lyase (ACLY), thereby potentially regulating ACLY activity and fatty acid synthesis. Activates the 3B isoform of cyclic nucleotide phosphodiesterase (PDE3B) via phosphorylation of 'Ser-273', resulting in reduced cyclic AMP levels and inhibition of lipolysis. Phosphorylates PIKFYVE on 'Ser-318', which results in increased PI(3)P-5 activity. The Rho GTPase-activating protein DLC1 is another substrate and its phosphorylation is implicated in the regulation cell proliferation and cell growth. AKT plays a role as key modulator of the AKT-mTOR signaling pathway controlling the tempo of the process of newborn neurons integration during adult neurogenesis, including correct neuron positioning, dendritic development and synapse formation. Signals downstream of phosphatidylinositol 3-kinase (PI(3)K) to mediate the effects of various growth factors such as platelet-derived growth factor (PDGF), epidermal growth factor (EGF), insulin and insulin-like growth factor 1 (IGF1). AKT mediates the antiapoptotic effects of IGF1. Essential for the SPATA13-mediated regulation of cell migration and adhesion assembly and disassembly. May be involved in the regulation of the placental development. In response to lysophosphatidic acid stimulation, inhibits the ciliogenesis cascade. In this context, phosphorylates WDR44, hence stabilizing its interaction with Rab11 and preventing the formation of the ciliogenic Rab11-FIP3-RAB3IP complex. Also phosphorylates RAB3IP/Rabin8, thus may affect RAB3IP guanine nucleotide exchange factor (GEF) activity toward Rab8, which is important for cilia growth. Phosphorylates PKP1, facilitating its interaction with YWHAG and translocation to the nucleus, ultimately resulting in a reduction in keratinocyte intercellular adhesion. Phosphorylation of PKP1 increases PKP1 protein stability, translocation to the cytoplasm away from desmosome plaques and PKP1-driven cap-dependent translation. Several AKT2-specific substrates have been identified, including ANKRD2, C2CD5, CLK2 and PITX2. May play a role in myoblast differentiation. In this context, may act through PITX2 phosphorylation. Unphosphorylated PITX2 associates with an ELAVL1/HuR-containing complex, which stabilizes cyclin mRNA and ensuring cell proliferation. Phosphorylation by AKT2 impairs this association, leading to CCND1 mRNA destabilization and progression towards differentiation. Also involved in the negative regulation of myogenesis in response to stress conditions. In this context, acts by phosphorylating ANKRD2. May also be a key regulator of glucose uptake. Regulates insulin-stimulated glucose transport by the increase of glucose transporter GLUT4 translocation from intracellular stores to the plasma membrane. In this context, acts by phosphorylating C2CD5/CDP138 on 'Ser-197' in insulin-stimulated adipocytes. Through the phosphorylation of CLK2 on 'Thr-343', involved in insulin-regulated suppression of hepatic gluconeogenesis. In Rattus norvegicus (Rat), this protein is RAC-beta serine/threonine-protein kinase.